A 228-amino-acid polypeptide reads, in one-letter code: L-ribulose-5-phosphate 4-epimerase UlaF (228 aa).

Substrate-binding positions include 26-27, 43-44, and 72-73; these read GN, SG, and SS. Asp-74, His-93, and His-95 together coordinate Zn(2+). Asp-118 functions as the Proton donor/acceptor in the catalytic mechanism. Zn(2+) is bound at residue His-167. Tyr-225 (proton donor/acceptor) is an active-site residue.

This sequence belongs to the aldolase class II family. AraD/FucA subfamily. Requires Zn(2+) as cofactor.

The catalysed reaction is L-ribulose 5-phosphate = D-xylulose 5-phosphate. The protein operates within cofactor degradation; L-ascorbate degradation; D-xylulose 5-phosphate from L-ascorbate: step 4/4. Functionally, catalyzes the isomerization of L-ribulose 5-phosphate to D-xylulose 5-phosphate. Is involved in the anaerobic L-ascorbate utilization. This chain is L-ribulose-5-phosphate 4-epimerase UlaF, found in Escherichia coli (strain 55989 / EAEC).